A 320-amino-acid chain; its full sequence is MNHYDQYQKYKKKYLDLKNQLNNSSQYGGNCGNYGNNQFNNQFNSQATNRYQTGGAEFDLKDEVAFWGRQMMEHLLLLHLGLDEEELKNSALQNHMDWKRYLTENFFSKGVNPGPDQAFLTTNELEKIGLLNKNVVNGLIDQTIQYKSKLVKTLNSGQWVGWIYPAMAQHMLEEAEYFKRKVNGPDYTPEQETKFVVHHHSTEMGATTQLLDPTEKDNIKIAKSYADICMSKLSGRNKKPFPNQWTSQEEAILRGQDPVDLATLMRISLKYSRELTQFAKETGQKIDSKQLKSIIHPVLAHHIFREFYRFTKRLEQLGAQ.

The stretch at 1–26 (MNHYDQYQKYKKKYLDLKNQLNNSSQ) forms a coiled coil.

Its subcellular location is the virion. This is an uncharacterized protein from Acanthamoeba polyphaga mimivirus (APMV).